The sequence spans 888 residues: Leucine--tRNA ligase (888 aa).

The short motif at Pro42–His52 is the 'HIGH' region element. The 'KMSKS' region signature appears at Thr640 to Ser644. Lys643 is an ATP binding site.

The protein belongs to the class-I aminoacyl-tRNA synthetase family.

It localises to the cytoplasm. It carries out the reaction tRNA(Leu) + L-leucine + ATP = L-leucyl-tRNA(Leu) + AMP + diphosphate. The chain is Leucine--tRNA ligase from Polaromonas naphthalenivorans (strain CJ2).